Reading from the N-terminus, the 104-residue chain is Replication restart protein PriB (104 aa).

The SSB domain maps to 1–101 (MTNRLALSGT…LHAEQIELID (101 aa)).

It belongs to the PriB family. As to quaternary structure, homodimer. Interacts with PriA and DnaT. Component of the replication restart primosome. Primosome assembly occurs via a 'hand-off' mechanism. PriA binds to replication forks, subsequently PriB then DnaT bind; DnaT then displaces ssDNA to generate the helicase loading substrate.

Its function is as follows. Involved in the restart of stalled replication forks, which reloads the replicative helicase on sites other than the origin of replication; the PriA-PriB pathway is the major replication restart pathway. During primosome assembly it facilitates complex formation between PriA and DnaT on DNA; stabilizes PriA on DNA. Stimulates the DNA unwinding activity of PriA helicase. In Salmonella agona (strain SL483), this protein is Replication restart protein PriB.